Reading from the N-terminus, the 601-residue chain is MTASPKDEMWTVFKRLLGYLKPMKGMFLLSVCGLIVYGLVDAAFISFIGPFIDKGFSSSTPAISNGIALPTSQGFHADNQVLLMAPIVVILMFSLRGFANFVSTYGISYMSARLIMDMRQQVFEHYLSLPVSYMDKENTGNLISKVTFDTEQIARASGSALISIVRDGVTVIGMLGLMFYNSWKLSLCILVIGPIMGLVITIVSRRFRKVSKQIQTAMGDVSAATEQMIKGHKNVLAFGGQETETARFAKINDRNRHQNMKLAVAQAVSQPLIMVIGSFALAFVLYAASLDSMKADLTAGTFATILGAMMAMLQPIKNLTRVNAEFQRGIAACTTVFELLDTLPESDTGTYTVKRAKGNLRFDNVSFSYEGQERRALDKIDFEVTQGQTLALVGRSGSGKSTIASLVTRFYTGLESGDIKLDDVSIYDYSLKSLRSQVALVSQQVTLFNDTIANNIAYAYPGEATREQIIQAATLAHAMEFIEQLPEGLDTQVGENGVLLSGGQRQRIAIARAMLRDAPVLILDEATSALDTESEKAIQQGLDNLRQNRTSVVIAHRLSTIESADQILVVDQGRIVERGTHKSLLELGGMYAKLYQMQFGS.

In terms of domain architecture, ABC transmembrane type-1 spans 28–328 (LLSVCGLIVY…LTRVNAEFQR (301 aa)). A run of 6 helical transmembrane segments spans residues 32–52 (CGLIVYGLVDAAFISFIGPFI), 81–101 (VLLMAPIVVILMFSLRGFANF), 160–180 (ALISIVRDGVTVIGMLGLMFY), 183–203 (WKLSLCILVIGPIMGLVITIV), 267–287 (AVSQPLIMVIGSFALAFVLYA), and 296–316 (DLTAGTFATILGAMMAMLQPI). Residues 360–597 (LRFDNVSFSY…GGMYAKLYQM (238 aa)) form the ABC transporter domain. 394 to 401 (GRSGSGKS) is an ATP binding site.

This sequence belongs to the ABC transporter superfamily. Lipid exporter (TC 3.A.1.106) family. In terms of assembly, homodimer.

Its subcellular location is the cell inner membrane. The enzyme catalyses ATP + H2O + lipid A-core oligosaccharideSide 1 = ADP + phosphate + lipid A-core oligosaccharideSide 2.. Functionally, involved in lipopolysaccharide (LPS) biosynthesis. Translocates lipid A-core from the inner to the outer leaflet of the inner membrane. Transmembrane domains (TMD) form a pore in the inner membrane and the ATP-binding domain (NBD) is responsible for energy generation. The polypeptide is ATP-dependent lipid A-core flippase (Shewanella sp. (strain MR-4)).